Consider the following 282-residue polypeptide: Undecaprenyl-diphosphatase 1 (282 aa).

Transmembrane regions (helical) follow at residues methionine 1–leucine 21, glycine 46–tryptophan 66, alanine 91–phenylalanine 111, serine 117–isoleucine 137, methionine 150–valine 170, phenylalanine 193–leucine 213, leucine 226–tryptophan 246, and valine 260–leucine 280.

Belongs to the UppP family.

Its subcellular location is the cell inner membrane. It carries out the reaction di-trans,octa-cis-undecaprenyl diphosphate + H2O = di-trans,octa-cis-undecaprenyl phosphate + phosphate + H(+). Its function is as follows. Catalyzes the dephosphorylation of undecaprenyl diphosphate (UPP). Confers resistance to bacitracin. In Rhodospirillum rubrum (strain ATCC 11170 / ATH 1.1.1 / DSM 467 / LMG 4362 / NCIMB 8255 / S1), this protein is Undecaprenyl-diphosphatase 1.